The following is a 51-amino-acid chain: Large ribosomal subunit protein bL33 (51 aa).

Belongs to the bacterial ribosomal protein bL33 family.

This chain is Large ribosomal subunit protein bL33, found in Ruthia magnifica subsp. Calyptogena magnifica.